The chain runs to 984 residues: uncharacterized protein (984 aa).

The tract at residues 941–984 (FGPSGPGPNQGPGDDYNNFKSTKYPRNGYNKYQPNNRIHSRNRY) is disordered.

The protein localises to the virion. This is an uncharacterized protein from Acanthamoeba polyphaga (Amoeba).